The chain runs to 544 residues: Aspartokinase (544 aa).

Residues 463–535 (LVGKQMVNFI…SAIGDSSAVD (73 aa)) form the ACT domain.

The protein belongs to the aspartokinase family.

It catalyses the reaction L-aspartate + ATP = 4-phospho-L-aspartate + ADP. It participates in amino-acid biosynthesis; L-methionine biosynthesis via de novo pathway; L-homoserine from L-aspartate: step 1/3. The protein operates within amino-acid biosynthesis; L-threonine biosynthesis; L-threonine from L-aspartate: step 1/5. In terms of biological role, phosphorylates aspartate, the first step in the biosynthesis of amino acids that derive from aspartate (the aspartate family of amino acids), including methioinine and threonine, the latter of which is a precursor to isoleucine. The sequence is that of Aspartokinase from Candida albicans (strain SC5314 / ATCC MYA-2876) (Yeast).